A 103-amino-acid chain; its full sequence is Histone H4 (103 aa).

The segment covering 1–14 has biased composition (gly residues); that stretch reads MSGRGKGGKGLGKG. Residues 1-20 are disordered; the sequence is MSGRGKGGKGLGKGGAKRHR. S2 is subject to N-acetylserine. 2 positions are modified to N6-acetyl-N6-methyllysine; alternate: K6 and K13. A DNA-binding region spans residues 17-21; the sequence is KRHRK. K21 carries the N6-methyllysine modification.

Belongs to the histone H4 family. As to quaternary structure, the nucleosome is a histone octamer containing two molecules each of H2A, H2B, H3 and H4 assembled in one H3-H4 heterotetramer and two H2A-H2B heterodimers. The octamer wraps approximately 147 bp of DNA.

It localises to the nucleus. It is found in the chromosome. Functionally, core component of nucleosome. Nucleosomes wrap and compact DNA into chromatin, limiting DNA accessibility to the cellular machineries which require DNA as a template. Histones thereby play a central role in transcription regulation, DNA repair, DNA replication and chromosomal stability. DNA accessibility is regulated via a complex set of post-translational modifications of histones, also called histone code, and nucleosome remodeling. This is Histone H4 from Solaster stimpsoni (Striped sun sea star).